The primary structure comprises 102 residues: Large ribosomal subunit protein uL24 (102 aa).

This sequence belongs to the universal ribosomal protein uL24 family. Part of the 50S ribosomal subunit.

In terms of biological role, one of two assembly initiator proteins, it binds directly to the 5'-end of the 23S rRNA, where it nucleates assembly of the 50S subunit. Functionally, one of the proteins that surrounds the polypeptide exit tunnel on the outside of the subunit. The sequence is that of Large ribosomal subunit protein uL24 from Burkholderia ambifaria (strain ATCC BAA-244 / DSM 16087 / CCUG 44356 / LMG 19182 / AMMD) (Burkholderia cepacia (strain AMMD)).